We begin with the raw amino-acid sequence, 125 residues long: Histone H2A (125 aa).

Basic residues predominate over residues 1 to 18 (MSGRGKGGKAKAKAKSRS). The disordered stretch occupies residues 1–21 (MSGRGKGGKAKAKAKSRSSRA). Position 2 is an N-acetylserine (Ser2). The residue at position 104 (Gln104) is an N5-methylglutamine.

The protein belongs to the histone H2A family. The nucleosome is a histone octamer containing two molecules each of H2A, H2B, H3 and H4 assembled in one H3-H4 heterotetramer and two H2A-H2B heterodimers. The octamer wraps approximately 147 bp of DNA.

It localises to the nucleus. Its subcellular location is the chromosome. Core component of nucleosome. Nucleosomes wrap and compact DNA into chromatin, limiting DNA accessibility to the cellular machineries which require DNA as a template. Histones thereby play a central role in transcription regulation, DNA repair, DNA replication and chromosomal stability. DNA accessibility is regulated via a complex set of post-translational modifications of histones, also called histone code, and nucleosome remodeling. The chain is Histone H2A from Mytilus californianus (California mussel).